The chain runs to 88 residues: Small ribosomal subunit protein bS16 (88 aa).

It belongs to the bacterial ribosomal protein bS16 family.

The chain is Small ribosomal subunit protein bS16 from Sorangium cellulosum (strain So ce56) (Polyangium cellulosum (strain So ce56)).